We begin with the raw amino-acid sequence, 193 residues long: MKTLIRPLVVIFAVLTVVTGMAYPAVMTAFGQAVFPAQANGSLIERDGRAVGSALIGQPFDAPRYFWGRLSATAPMPYNAAGSGGSNLGPLNPSLAEQVKARIAALRDAGTDLSKPVPVDLVTASASGLDPDITPAAAAYQIERVAKARKLTADAVARLVAANTTGRQFGVLGEPRVNVLKLNLALDAAQGGH.

Residues 7-27 (PLVVIFAVLTVVTGMAYPAVM) traverse the membrane as a helical segment.

It belongs to the KdpC family. The system is composed of three essential subunits: KdpA, KdpB and KdpC.

It localises to the cell inner membrane. Part of the high-affinity ATP-driven potassium transport (or Kdp) system, which catalyzes the hydrolysis of ATP coupled with the electrogenic transport of potassium into the cytoplasm. This subunit acts as a catalytic chaperone that increases the ATP-binding affinity of the ATP-hydrolyzing subunit KdpB by the formation of a transient KdpB/KdpC/ATP ternary complex. The chain is Potassium-transporting ATPase KdpC subunit from Burkholderia vietnamiensis (strain G4 / LMG 22486) (Burkholderia cepacia (strain R1808)).